A 424-amino-acid chain; its full sequence is 3-phosphoshikimate 1-carboxyvinyltransferase (424 aa).

3-phosphoshikimate-binding residues include lysine 21, serine 22, and arginine 26. Position 21 (lysine 21) interacts with phosphoenolpyruvate. Phosphoenolpyruvate is bound by residues glycine 92 and arginine 120. The 3-phosphoshikimate site is built by serine 163, serine 164, glutamine 165, serine 191, aspartate 306, and lysine 333. Position 165 (glutamine 165) interacts with phosphoenolpyruvate. Aspartate 306 functions as the Proton acceptor in the catalytic mechanism. Residues arginine 337, arginine 379, and lysine 405 each contribute to the phosphoenolpyruvate site.

This sequence belongs to the EPSP synthase family. Monomer.

It is found in the cytoplasm. It carries out the reaction 3-phosphoshikimate + phosphoenolpyruvate = 5-O-(1-carboxyvinyl)-3-phosphoshikimate + phosphate. It participates in metabolic intermediate biosynthesis; chorismate biosynthesis; chorismate from D-erythrose 4-phosphate and phosphoenolpyruvate: step 6/7. Functionally, catalyzes the transfer of the enolpyruvyl moiety of phosphoenolpyruvate (PEP) to the 5-hydroxyl of shikimate-3-phosphate (S3P) to produce enolpyruvyl shikimate-3-phosphate and inorganic phosphate. The sequence is that of 3-phosphoshikimate 1-carboxyvinyltransferase from Clostridium perfringens (strain 13 / Type A).